A 350-amino-acid polypeptide reads, in one-letter code: Cobalt-precorrin-5B C(1)-methyltransferase (350 aa).

It belongs to the CbiD family.

It carries out the reaction Co-precorrin-5B + S-adenosyl-L-methionine = Co-precorrin-6A + S-adenosyl-L-homocysteine. Its pathway is cofactor biosynthesis; adenosylcobalamin biosynthesis; cob(II)yrinate a,c-diamide from sirohydrochlorin (anaerobic route): step 6/10. Functionally, catalyzes the methylation of C-1 in cobalt-precorrin-5B to form cobalt-precorrin-6A. In Syntrophotalea carbinolica (strain DSM 2380 / NBRC 103641 / GraBd1) (Pelobacter carbinolicus), this protein is Cobalt-precorrin-5B C(1)-methyltransferase.